Reading from the N-terminus, the 180-residue chain is MVALPTAWCSVALALLVALHEGKSQSAATSEEPPAPSARARGSHLRLRRCSCNSWLDKECVYFCHLDIIWVNTPGQTAPYGLGNPPRRQRRSLPRRCECYSTRDSACVTFCHQKPWPKASAVPGEGSPTDLLWTSKTRTTAGELLRRLRDIFAAKRNFTRHQQQKATREPESSHSRWRKR.

The first 26 residues, 1–26, serve as a signal peptide directing secretion; it reads MVALPTAWCSVALALLVALHEGKSQS. A propeptide spanning residues 27 to 47 is cleaved from the precursor; sequence AATSEEPPAPSARARGSHLRL. 2 cysteine pairs are disulfide-bonded: C50–C64 and C52–C60. Positions 71–180 are excised as a propeptide; that stretch reads VNTPGQTAPY…ESSHSRWRKR (110 aa). An endothelin-like region spans residues 97–112; the sequence is CECYSTRDSACVTFCH. The disordered stretch occupies residues 157-180; the sequence is NFTRHQQQKATREPESSHSRWRKR.

The protein belongs to the endothelin/sarafotoxin family.

Its subcellular location is the secreted. In terms of biological role, endothelins are endothelium-derived vasoconstrictor peptides. This chain is Endothelin-2 (EDN2), found in Atelerix albiventris (Middle-African hedgehog).